Reading from the N-terminus, the 333-residue chain is Photosystem II assembly protein Ycf48 (333 aa).

An N-terminal signal peptide occupies residues 1–25; that stretch reads MRVKMFKPLRLVLLIAVSVLLMAAR.

Belongs to the Ycf48 family. Part of early PSII assembly complexes which includes D1 (psbA) and PsbI; not found in mature PSII. Binds to the lumenal side of PSII complexes. Interacts with YidC.

The protein resides in the cellular thylakoid lumen. In terms of biological role, a factor required for optimal assembly of photosystem II (PSII), acting in the early stages of PSII assembly. Also plays a role in replacement of photodamaged D1 (psbA). Assists YidC in synthesis of chlorophyll-binding proteins. This is Photosystem II assembly protein Ycf48 from Synechococcus sp. (strain JA-2-3B'a(2-13)) (Cyanobacteria bacterium Yellowstone B-Prime).